A 780-amino-acid polypeptide reads, in one-letter code: cGMP-dependent protein kinase egl-4 (780 aa).

Disordered stretches follow at residues 1–55 (MSSG…QVQV) and 119–143 (EQKA…DQLG). The span at 9 to 35 (SGGGGGGGGASGGAGGGAPGGGGGGIR) shows a compositional bias: gly residues. The segment covering 46-55 (DQPNGNQVQV) has biased composition (polar residues). Positions 61 to 127 (EAHELQKLIP…LEQKAQSAAS (67 aa)) form a coiled coil. Residues 265–268 (GELA), 275–276 (RT), Arg380, 389–392 (GERA), 399–400 (RT), and Tyr434 each bind 3',5'-cyclic GMP. Residues 469-729 (VKRLATLGVG…VNDIRKHRWF (261 aa)) enclose the Protein kinase domain. ATP-binding positions include 475–483 (LGVGGFGRV) and Lys499. The Nuclear localization signal signature appears at 492-504 (KAKTFALKALKKK). Catalysis depends on Asp593, which acts as the Proton acceptor. In terms of domain architecture, AGC-kinase C-terminal spans 730–780 (MGFDWEGLRSRTLKPPILPKVSNPADVTNFDNYPPDNDVPPDEFSGWDEGF). The disordered stretch occupies residues 757–780 (TNFDNYPPDNDVPPDEFSGWDEGF).

This sequence belongs to the protein kinase superfamily. AGC Ser/Thr protein kinase family. cGMP subfamily. As to quaternary structure, when phosphorylated, interacts with saeg-2. May interact with saeg-1. Mg(2+) serves as cofactor. In terms of processing, autophosphorylated. As to expression, expressed in AWC sensory neurons (at protein level). Mainly expressed in head neurons, hypodermis, intestine and body wall muscles. L2 and L3 larvae show extensive expression, lower levels are observed in L4 larvae, later embryos and adults. Isoform c is expressed in a subset of neurons in the head, nerve ring, and ventral nerve cord including some motor neurons, also in several neurons in the tail, the pharyngeal marginal cells, body muscle, intestine, vulval muscles, and spermatheca.

The protein resides in the cytoplasm. The protein localises to the nucleus. It catalyses the reaction L-seryl-[protein] + ATP = O-phospho-L-seryl-[protein] + ADP + H(+). It carries out the reaction L-threonyl-[protein] + ATP = O-phospho-L-threonyl-[protein] + ADP + H(+). Binding of cGMP results in enzyme activation. Promotes chemoreceptor gene expression in response to increased cGMP levels by antagonizing the gene repression functions of the class II HDAC hda-4 and the mef-2 transcription factor. Regulates gene expression via recruitment of a histone deacetylase complex containing hda-2, saeg-1 and saeg-2. Represses body size and lifespan through the dbl-1 and insulin pathways, respectively. May also signal through daf-3 and/or daf-5. Role in egg-laying, dauer formation and motility. Regulates behavioral responses to various chemosensory stimuli in sensory neurons. Required for the initiation of long term adaptation to prolonged odor exposure which results in a decrease in odor seeking behavior. May regulate this process by phosphorylating tax-2, a subunit of cyclic nucleotide-gated channel tax-2/tax-4. In ASH sensory neurons, negatively regulates avoidance behavior to some bitter tastants, such as quinine, probably by phosphorylating rgs-2 and rgs-3 which are 2 regulator of G-protein signaling proteins. In AWB sensory neurons, involved in avoidance behavior to some repellent odors. In ASE left (ASEL) sensory neuron, involved in the sensing of environmental alkalinity downstream of receptor-type guanylate cyclase gcy-14. In sensory neurons, involved in the signaling pathway downstream of insulin, TGF-beta and receptor-type guanylate cyclase responsible for inducing quiescence after food intake. Might play a role in aversive olfactory learning in AWC neurons when an odor is associated with food deprivation, depending on the ins-1/age-1 signal from the AIA to the AWC neurons. Probably by regulating neuronal transmission downstream of lin-3 and receptor lin-23 and phospholipase plc-3 in ALA neurons, involved in the decrease in locomotion during the quiescent state that precedes each larval molt. The polypeptide is cGMP-dependent protein kinase egl-4 (Caenorhabditis elegans).